The following is a 198-amino-acid chain: Succinate dehydrogenase [ubiquinone] cytochrome b subunit, mitochondrial (198 aa).

A mitochondrion-targeting transit peptide spans 1–50 (MSAMMVKLGLNKSALLLKPSAFSRAAALSSSRRLLFNTARTNFLSTSPLK). The Mitochondrial matrix portion of the chain corresponds to 51 to 99 (NVASEMNTKAAIAEEQILNKQRAKRPISPHLTIYQPQLTWYLSSLHRIS). S93 and R97 together coordinate a ubiquinone. Residues 100-120 (LVLMGLGFYLFTILFGVSGLL) traverse the membrane as a helical segment. Over 121-139 (GLGLTTEKVSNWYHQKFSK) the chain is Mitochondrial intermembrane. The chain crosses the membrane as a helical span at residues 140 to 160 (ITEWSIKGSFAYLFAIHYGGA). Residue H156 participates in heme binding. Residues 161 to 175 (IRHLIWDTAKELTLK) are Mitochondrial matrix-facing. A helical transmembrane segment spans residues 176–196 (GVYRTGYALIGFTAVLGTYLL). At 197 to 198 (TL) the chain is on the mitochondrial intermembrane side.

The protein belongs to the cytochrome b560 family. Forms part of complex II containing four subunits: a flavoprotein (FP), an iron-sulfur protein (IP) and a cytochrome b composed of two integral membrane proteins. Requires heme as cofactor.

It is found in the mitochondrion inner membrane. It participates in carbohydrate metabolism; tricarboxylic acid cycle. Membrane-anchoring mono-heme cytochrome b subunit of succinate dehydrogenase (SDH) that is involved in system II of the mitochondrial electron transport chain and is responsible for transferring electrons from succinate to ubiquinone (coenzyme Q). SDH3 and SDH4 form the membrane dimer that anchors the catalytic dimer formed by SDH1 and SDH2 to the matrix surface of the mitochondrial inner membrane. Electrons originating from the catalytic dimer enter the membrane dimer for ubiquinone reduction. In Saccharomyces cerevisiae (strain ATCC 204508 / S288c) (Baker's yeast), this protein is Succinate dehydrogenase [ubiquinone] cytochrome b subunit, mitochondrial (SDH3).